The chain runs to 1292 residues: Kinesin-like protein KIN-12A (1292 aa).

The interval 1 to 86 (MKKHFTLPRN…LSAETATESG (86 aa)) is disordered. The segment covering 19–29 (PHSPNPSISKS) has biased composition (low complexity). Residues 62–71 (PLPPRPPPSN) are compositionally biased toward pro residues. Residues 91–426 (GVKVIVRMKP…LRFAQRAKAI (336 aa)) enclose the Kinesin motor domain. Position 165–172 (165–172 (GQTGSGKT)) interacts with ATP. Microtubules-binding regions lie at residues 293–297 (SSRSH), 326–332 (VDLAGSE), and 375–379 (HIPYR). Positions 424-461 (KAIQNKAVVNEVMQDDVNFLRGVIHQLRDELQRMKNDG) are neck. The tract at residues 677–724 (SVSPTIRNSRKSLKTSELSTASQKDSEGENLVTEAADPSPATSKKMNN) is disordered. Coiled coils occupy residues 945–992 (EVLK…CYID) and 1047–1232 (SEEL…NQLV).

The protein belongs to the TRAFAC class myosin-kinesin ATPase superfamily. Kinesin family. KIN-12 subfamily. As to quaternary structure, homodimer and heterodimer with KIN12B. Interacts with TIO.

It localises to the cytoplasm. Its subcellular location is the cytoskeleton. It is found in the phragmoplast. In terms of biological role, plus-end directed kinesin-like motor enzyme that plays a critical role in the organization of phragmoplast microtubules during cytokinesis. Constitutes a signaling module in association with serine/threonine-protein kinase TIO that is required to support phragmoplast expansion and cell-plate growth in plant cells. Binds microtubules in an ATP-sensitive manner. This is Kinesin-like protein KIN-12A from Arabidopsis thaliana (Mouse-ear cress).